The chain runs to 408 residues: Peptidase T (408 aa).

Histidine 78 provides a ligand contact to Zn(2+). Aspartate 80 is an active-site residue. Aspartate 141 contributes to the Zn(2+) binding site. The Proton acceptor role is filled by glutamate 175. Residues glutamate 176, aspartate 198, and histidine 380 each coordinate Zn(2+).

This sequence belongs to the peptidase M20B family. Zn(2+) is required as a cofactor.

Its subcellular location is the cytoplasm. It catalyses the reaction Release of the N-terminal residue from a tripeptide.. In terms of biological role, cleaves the N-terminal amino acid of tripeptides. The sequence is that of Peptidase T from Clostridium botulinum (strain Okra / Type B1).